The sequence spans 963 residues: Importin-13 (963 aa).

HEAT repeat units follow at residues 24–54 (ENVE…QAQV), 56–88 (PQAW…KISR), 95–135 (TDQY…LSMM), 142–179 (AVAD…EFQT), 194–231 (LAVE…SWVQ), 236–268 (LQDC…NAIS), 276–325 (VNTL…ALLD), 330–372 (WQSF…DDIL), 375–438 (EAEK…YEML), 440–476 (AELL…FQSI), 487–522 (VVPG…WLAD), 524–558 (PVMI…CREC), 562–600 (LPPY…LLSA), 603–648 (VEEI…SNLF), 676–716 (PVVV…VKTL), 720–754 (FAPM…VHIF), 761–803 (FPPI…ALKR), 815–845 (VKAV…TELL), 860–893 (EDGR…FALN), and 897–931 (FSLL…QQIL). Positions 45 to 111 (AQKWLMQAQV…KAQLFTQITR (67 aa)) constitute an Importin N-terminal domain.

This sequence belongs to the importin beta family. In terms of assembly, interacts with UBC9, RAN, RBM8A, eIF-1A and PAX6.

Its subcellular location is the cytoplasm. The protein localises to the nucleus. Functions in nuclear protein import as nuclear transport receptor. Serves as receptor for nuclear localization signals (NLS) in cargo substrates. Is thought to mediate docking of the importin/substrate complex to the nuclear pore complex (NPC) through binding to nucleoporin and the complex is subsequently translocated through the pore by an energy requiring, Ran-dependent mechanism. At the nucleoplasmic side of the NPC, Ran binds to the importin, the importin/substrate complex dissociates and importin is re-exported from the nucleus to the cytoplasm where GTP hydrolysis releases Ran. The directionality of nuclear import is thought to be conferred by an asymmetric distribution of the GTP- and GDP-bound forms of Ran between the cytoplasm and nucleus. Mediates the nuclear import of UBC9, the RBM8A/MAGOH complex, PAX6 and probably other members of the paired homeobox family. Also mediates nuclear export of eIF-1A, and the cytoplasmic release of eIF-1A is triggered by the loading of import substrates onto IPO13. In Mus musculus (Mouse), this protein is Importin-13 (Ipo13).